The following is a 277-amino-acid chain: Large ribosomal subunit protein uL2 (277 aa).

Residues 222 to 277 form a disordered region; sequence GVAMNPVDHPHGGGEGRTSGGRHPVSPWGKPTKGKRTRSNKATDKFIMRSRHQRKK.

The protein belongs to the universal ribosomal protein uL2 family. Part of the 50S ribosomal subunit. Forms a bridge to the 30S subunit in the 70S ribosome.

Functionally, one of the primary rRNA binding proteins. Required for association of the 30S and 50S subunits to form the 70S ribosome, for tRNA binding and peptide bond formation. It has been suggested to have peptidyltransferase activity; this is somewhat controversial. Makes several contacts with the 16S rRNA in the 70S ribosome. This Bartonella bacilliformis (strain ATCC 35685 / KC583 / Herrer 020/F12,63) protein is Large ribosomal subunit protein uL2.